The primary structure comprises 290 residues: Agroclavine dehydrogenase (290 aa).

This sequence belongs to the fgaFS/easG family. In terms of assembly, monomer.

It catalyses the reaction agroclavine + NADP(+) = didehydroagroclavine + NADPH + H(+). The protein operates within alkaloid biosynthesis; ergot alkaloid biosynthesis. Its function is as follows. Agroclavine dehydrogenase; part of the gene cluster that mediates the biosynthesis of fungal ergot alkaloid. DmaW catalyzes the first step of ergot alkaloid biosynthesis by condensing dimethylallyl diphosphate (DMAP) and tryptophan to form 4-dimethylallyl-L-tryptophan. The second step is catalyzed by the methyltransferase easF that methylates 4-dimethylallyl-L-tryptophan in the presence of S-adenosyl-L-methionine, resulting in the formation of 4-dimethylallyl-L-abrine. The catalase easC and the FAD-dependent oxidoreductase easE then transform 4-dimethylallyl-L-abrine to chanoclavine-I which is further oxidized by easD in the presence of NAD(+), resulting in the formation of chanoclavine-I aldehyde. Agroclavine dehydrogenase easG then mediates the conversion of chanoclavine-I aldehyde to agroclavine via a non-enzymatic adduct reaction: the substrate is an iminium intermediate that is formed spontaneously from chanoclavine-I aldehyde in the presence of glutathione. The presence of easA is not required to complete this reaction. Further conversion of agroclavine to paspalic acid is a two-step process involving oxidation of agroclavine to elymoclavine and of elymoclavine to paspalic acid, the second step being performed by the elymoclavine oxidase cloA. Paspalic acid is then further converted to D-lysergic acid. Ergopeptines are assembled from D-lysergic acid and three different amino acids by the D-lysergyl-peptide-synthetases composed each of a monomudular and a trimodular nonribosomal peptide synthetase subunit. LpsB and lpsC encode the monomodular subunits responsible for D-lysergic acid activation and incorporation into the ergopeptine backbone. LpsA1 and A2 subunits encode the trimodular nonribosomal peptide synthetase assembling the tripeptide portion of ergopeptines. LpsA1 is responsible for formation of the major ergopeptine, ergotamine, and lpsA2 for alpha-ergocryptine, the minor ergopeptine of the total alkaloid mixture elaborated by C.purpurea. D-lysergyl-tripeptides are assembled by the nonribosomal peptide synthetases and released as N-(D-lysergyl-aminoacyl)-lactams. Cyclolization of the D-lysergyl-tripeptides is performed by the Fe(2+)/2-ketoglutarate-dependent dioxygenase easH which introduces a hydroxyl group into N-(D-lysergyl-aminoacyl)-lactam at alpha-C of the aminoacyl residue followed by spontaneous condensation with the terminal lactam carbonyl group. The polypeptide is Agroclavine dehydrogenase (Claviceps purpurea (Ergot fungus)).